A 243-amino-acid polypeptide reads, in one-letter code: Type III pantothenate kinase (243 aa).

7-14 (DLGNSRFK) contributes to the ATP binding site. Residues tyrosine 91 and 98–101 (GVDR) contribute to the substrate site. Catalysis depends on aspartate 100, which acts as the Proton acceptor. Threonine 122 is a binding site for ATP. A substrate-binding site is contributed by threonine 172.

The protein belongs to the type III pantothenate kinase family. As to quaternary structure, homodimer. The cofactor is NH4(+). Requires K(+) as cofactor.

The protein resides in the cytoplasm. It carries out the reaction (R)-pantothenate + ATP = (R)-4'-phosphopantothenate + ADP + H(+). The protein operates within cofactor biosynthesis; coenzyme A biosynthesis; CoA from (R)-pantothenate: step 1/5. In terms of biological role, catalyzes the phosphorylation of pantothenate (Pan), the first step in CoA biosynthesis. The polypeptide is Type III pantothenate kinase (Stenotrophomonas maltophilia (strain R551-3)).